A 168-amino-acid chain; its full sequence is uncharacterized protein (168 aa).

The chain crosses the membrane as a helical span at residues 36 to 56 (LNWWQLIVVVGIAISGIAAIA). Residue N74 is glycosylated (N-linked (GlcNAc...) asparagine; by host). Transmembrane regions (helical) follow at residues 86-106 (FIIIIVLSCLAVVGGIILAWL), 115-135 (KLLTMGLTTGGILGILYALTI), and 143-163 (MVKLGISWVSLLAFVLLGFFI). N164 carries N-linked (GlcNAc...) asparagine; by host glycosylation.

It localises to the membrane. This is an uncharacterized protein from Acanthamoeba polyphaga mimivirus (APMV).